A 154-amino-acid chain; its full sequence is 6,7-dimethyl-8-ribityllumazine synthase (154 aa).

5-amino-6-(D-ribitylamino)uracil-binding positions include phenylalanine 15, 47–49 (TFD), and 71–73 (AVI). 76-77 (ET) contributes to the (2S)-2-hydroxy-3-oxobutyl phosphate binding site. Histidine 79 (proton donor) is an active-site residue. Leucine 104 contacts 5-amino-6-(D-ribitylamino)uracil. Arginine 119 contacts (2S)-2-hydroxy-3-oxobutyl phosphate.

It belongs to the DMRL synthase family.

The catalysed reaction is (2S)-2-hydroxy-3-oxobutyl phosphate + 5-amino-6-(D-ribitylamino)uracil = 6,7-dimethyl-8-(1-D-ribityl)lumazine + phosphate + 2 H2O + H(+). Its pathway is cofactor biosynthesis; riboflavin biosynthesis; riboflavin from 2-hydroxy-3-oxobutyl phosphate and 5-amino-6-(D-ribitylamino)uracil: step 1/2. In terms of biological role, catalyzes the formation of 6,7-dimethyl-8-ribityllumazine by condensation of 5-amino-6-(D-ribitylamino)uracil with 3,4-dihydroxy-2-butanone 4-phosphate. This is the penultimate step in the biosynthesis of riboflavin. The sequence is that of 6,7-dimethyl-8-ribityllumazine synthase from Saccharolobus islandicus (strain M.16.27) (Sulfolobus islandicus).